The primary structure comprises 253 residues: Retinoic acid early-inducible protein 1-gamma (253 aa).

A signal peptide spans 1–28 (MAKAAVTKRHHFMIQKLLILLSYGYTNG). A disulfide bond links C37 and C56. Residues N38, N70, N83, N143, and N156 are each glycosylated (N-linked (GlcNAc...) asparagine). A disulfide bond links C90 and C190. The interval 198-230 (LKQSKEKPRSTSRSPSITQLTSTSPLPPPSHST) is disordered. Positions 211–221 (SPSITQLTSTS) are enriched in low complexity. S227 carries the GPI-anchor amidated serine lipid modification. Positions 228–253 (HSTSKKGFISVGLIFISLLFAFAFAM) are cleaved as a propeptide — removed in mature form.

The protein belongs to the NKG2D ligand family. In terms of processing, glycosylated. In terms of tissue distribution, expressed predominantly in embryonic brain.

It localises to the cell membrane. In terms of biological role, acts as a ligand for KLRK1. In Mus musculus (Mouse), this protein is Retinoic acid early-inducible protein 1-gamma (Raet1c).